Reading from the N-terminus, the 197-residue chain is Putative methyltransferase Mtx subunit A (197 aa).

Belongs to the MtrA family. May be part of a complex composed of 3 subunits; MtxA, MtxH and MtxX.

In Methanosarcina acetivorans (strain ATCC 35395 / DSM 2834 / JCM 12185 / C2A), this protein is Putative methyltransferase Mtx subunit A (mtxA).